The chain runs to 343 residues: Phosphatidylglycerol--prolipoprotein diacylglyceryl transferase (343 aa).

4 consecutive transmembrane segments (helical) span residues 22-42, 54-74, 97-117, and 123-143; these read IPIR…LIIG, GVIY…GRLY, VWEG…GAWI, and GIPL…AQAI. Position 145 (R145) interacts with a 1,2-diacyl-sn-glycero-3-phospho-(1'-sn-glycerol). Transmembrane regions (helical) follow at residues 193 to 213 and 257 to 277; these read VVHP…VLLI and VNSF…LLAP. The interval 283–343 is disordered; the sequence is PATLGGTPSS…SADNSGIVEK (61 aa). Acidic residues predominate over residues 295 to 325; sequence GGDDTAETEATADTEDTEDTEDGVTDAPEAD.

This sequence belongs to the Lgt family.

It localises to the cell membrane. The enzyme catalyses L-cysteinyl-[prolipoprotein] + a 1,2-diacyl-sn-glycero-3-phospho-(1'-sn-glycerol) = an S-1,2-diacyl-sn-glyceryl-L-cysteinyl-[prolipoprotein] + sn-glycerol 1-phosphate + H(+). The protein operates within protein modification; lipoprotein biosynthesis (diacylglyceryl transfer). In terms of biological role, catalyzes the transfer of the diacylglyceryl group from phosphatidylglycerol to the sulfhydryl group of the N-terminal cysteine of a prolipoprotein, the first step in the formation of mature lipoproteins. In Mycobacteroides abscessus (strain ATCC 19977 / DSM 44196 / CCUG 20993 / CIP 104536 / JCM 13569 / NCTC 13031 / TMC 1543 / L948) (Mycobacterium abscessus), this protein is Phosphatidylglycerol--prolipoprotein diacylglyceryl transferase.